A 215-amino-acid polypeptide reads, in one-letter code: Leucyl/phenylalanyl-tRNA--protein transferase (215 aa).

This sequence belongs to the L/F-transferase family.

It localises to the cytoplasm. It catalyses the reaction N-terminal L-lysyl-[protein] + L-leucyl-tRNA(Leu) = N-terminal L-leucyl-L-lysyl-[protein] + tRNA(Leu) + H(+). The enzyme catalyses N-terminal L-arginyl-[protein] + L-leucyl-tRNA(Leu) = N-terminal L-leucyl-L-arginyl-[protein] + tRNA(Leu) + H(+). It carries out the reaction L-phenylalanyl-tRNA(Phe) + an N-terminal L-alpha-aminoacyl-[protein] = an N-terminal L-phenylalanyl-L-alpha-aminoacyl-[protein] + tRNA(Phe). Functions in the N-end rule pathway of protein degradation where it conjugates Leu, Phe and, less efficiently, Met from aminoacyl-tRNAs to the N-termini of proteins containing an N-terminal arginine or lysine. This is Leucyl/phenylalanyl-tRNA--protein transferase from Campylobacter jejuni subsp. jejuni serotype O:6 (strain 81116 / NCTC 11828).